Consider the following 373-residue polypeptide: Protein U3 (373 aa).

Belongs to the herpesviridae US22 family.

This Human herpesvirus 6A (strain Uganda-1102) (HHV-6 variant A) protein is Protein U3 (U3).